Here is a 646-residue protein sequence, read N- to C-terminus: Autophagy-related protein 28 (646 aa).

Disordered regions lie at residues 1 to 148 (MSSP…HVDN) and 221 to 245 (PTRS…RGLK). Positions 12–21 (SPRQRLSNPL) are enriched in polar residues. Residues 63–75 (SATSTRRSSSPAS) show a composition bias toward low complexity. Polar residues predominate over residues 106–122 (MMMNQHPSRQSTVSSHG). 2 coiled-coil regions span residues 283–350 (LDKM…MEDV) and 485–514 (QQAA…ESKH). 2 disordered regions span residues 475-494 (SQAG…SQLS) and 546-612 (AAAV…RGSA). Composition is skewed to basic and acidic residues over residues 557 to 575 (STDK…SHDE) and 588 to 597 (RMEDHDHDPP).

It belongs to the ATG28 family.

The protein resides in the cytoplasm. It localises to the vacuole membrane. The protein localises to the cytoplasmic vesicle membrane. Required for the autophagic degradation of peroxisomes called pexophagy, but not essential for general autophagy. Involved in resistance to elevated pH. This is Autophagy-related protein 28 from Gibberella zeae (strain ATCC MYA-4620 / CBS 123657 / FGSC 9075 / NRRL 31084 / PH-1) (Wheat head blight fungus).